Consider the following 179-residue polypeptide: MAIEILRLGHRGERDKRISTHVALTSRALGAEKIIFTEEDKHVKESVERIVEAWGGEFKFEVVKSWRSYAKRFKDNGIVVHLTMYGENINKIMTEIREDISKTNKNLLLIIGAEKVPREAYDLADYNLSVGNQPHSEVAALAIFLDRFTEGKTLYSEYDDAKIKVTPSKSEKCVFVEKD.

S-adenosyl-L-methionine contacts are provided by residues leucine 82, 112–116, and 130–137; these read GAEKV and VGNQPHSE.

This sequence belongs to the aTrm56 family. In terms of assembly, homodimer.

Its subcellular location is the cytoplasm. The catalysed reaction is cytidine(56) in tRNA + S-adenosyl-L-methionine = 2'-O-methylcytidine(56) in tRNA + S-adenosyl-L-homocysteine + H(+). Functionally, specifically catalyzes the AdoMet-dependent 2'-O-ribose methylation of cytidine at position 56 in tRNAs. The sequence is that of tRNA (cytidine(56)-2'-O)-methyltransferase from Methanococcus maripaludis (strain DSM 14266 / JCM 13030 / NBRC 101832 / S2 / LL).